The following is a 513-amino-acid chain: Noroxomaritidine synthase 2 (513 aa).

A helical transmembrane segment spans residues 14–34 (HYPEILIAIACFLIFSLLLSA). Cys-458 provides a ligand contact to heme.

This sequence belongs to the cytochrome P450 family. Heme serves as cofactor. In terms of tissue distribution, mostly expressed in stems, and, to a lower extent, in bulbs, roots, leaves and flowers.

The protein localises to the membrane. It catalyses the reaction 4'-O-methylnorbelladine + reduced [NADPH--hemoprotein reductase] + O2 = (10bR,4aS)-noroxomaritidine + oxidized [NADPH--hemoprotein reductase] + 2 H2O + H(+). The catalysed reaction is 4'-O-methylnorbelladine + reduced [NADPH--hemoprotein reductase] + O2 = (10bS,4aR)-noroxomaritidine + oxidized [NADPH--hemoprotein reductase] + 2 H2O + H(+). It participates in alkaloid biosynthesis. In terms of biological role, cytochrome P450 that catalyzes an intramolecular para-para' C-C phenol coupling of 4'-O-methylnorbelladine in alkaloids biosynthesis, including haemanthamine- and crinamine-type alkaloids, promising anticancer agents. Catalyzes the formation of (10bR,4aS)-noroxomaritidine and (10bS,4aR)-noroxomaritidine from 4'-O-methylnorbelladine. The protein is Noroxomaritidine synthase 2 of Narcissus pseudonarcissus (Daffodil).